Reading from the N-terminus, the 327-residue chain is Prenyl transferase janC (327 aa).

Residues 3–23 (FPGAGPILGAIAVSSCLYFLF) traverse the membrane as a helical segment. K63 and H96 together coordinate isopentenyl diphosphate. 2 residues coordinate Mg(2+): D103 and D107. Dimethylallyl diphosphate-binding residues include R112 and K196. A glycan (N-linked (GlcNAc...) asparagine) is linked at N211.

Belongs to the FPP/GGPP synthase family.

It is found in the membrane. The protein operates within secondary metabolite biosynthesis. Its function is as follows. Prenyl transferase; part of the gene cluster that mediates the biosynthesis of the indole diterpenes janthitremanes such as shearinine K or shearinine A. The geranylgeranyl diphosphate (GGPP) synthase janG catalyzes the first step in janthitremane biosynthesis via conversion of farnesyl pyrophosphate and isopentyl pyrophosphate into geranylgeranyl pyrophosphate (GGPP). Condensation of indole-3-glycerol phosphate with GGPP by the prenyl transferase janC then forms 3-geranylgeranylindole (3-GGI). Epoxidation by the FAD-dependent monooxygenase janM leads to a epoxidized-GGI that is substrate of the terpene cyclase janB for cyclization to yield paspaline. Paspaline is subsequently converted to 13-desoxypaspaline by the cytochrome P450 monooxygenase janP, via beta-PC-M6 in a series of alpha-face oxidations. The cytochrome P450 monooxygenase janQ is proposed to carry out sequential beta-face oxidation steps at C-7 and C-13 of 13-desoxypaspaline to form paspalicine and paspalinine respectively. The indole diterpene prenyltransferase janD may then convert paspalinine into shearinine K which is substrate of janO and/or additional enzymes for oxidation and cyclization to generate shearinine A. The chain is Prenyl transferase janC from Penicillium janthinellum (Penicillium vitale).